The sequence spans 117 residues: Immunoglobulin kappa variable 1D-43 (117 aa).

Residues 1–22 form the signal peptide; sequence MDMRVPAQRLGLLLLWFPGARC. Residues 23-45 form a framework-1 region; that stretch reads AIRMTQSPFSLSASVGDRVTITC. The region spanning 23–117 is the Ig-like domain; that stretch reads AIRMTQSPFS…YYCQQYYSTP (95 aa). Residues Cys-45 and Cys-110 are joined by a disulfide bond. Residues 46-56 form a complementarity-determining-1 region; it reads WASQGISSYLA. The interval 57 to 71 is framework-2; it reads WYQQKPAKAPKLFIY. The interval 72-78 is complementarity-determining-2; that stretch reads YASSLQS. Residues 79 to 110 are framework-3; that stretch reads GVPSRFSGSGSGTDYTLTISSLQPEDFATYYC. Residues 111-117 are complementarity-determining-3; that stretch reads QQYYSTP.

In terms of assembly, immunoglobulins are composed of two identical heavy chains and two identical light chains; disulfide-linked.

Its subcellular location is the secreted. The protein localises to the cell membrane. V region of the variable domain of immunoglobulin light chains that participates in the antigen recognition. Immunoglobulins, also known as antibodies, are membrane-bound or secreted glycoproteins produced by B lymphocytes. In the recognition phase of humoral immunity, the membrane-bound immunoglobulins serve as receptors which, upon binding of a specific antigen, trigger the clonal expansion and differentiation of B lymphocytes into immunoglobulins-secreting plasma cells. Secreted immunoglobulins mediate the effector phase of humoral immunity, which results in the elimination of bound antigens. The antigen binding site is formed by the variable domain of one heavy chain, together with that of its associated light chain. Thus, each immunoglobulin has two antigen binding sites with remarkable affinity for a particular antigen. The variable domains are assembled by a process called V-(D)-J rearrangement and can then be subjected to somatic hypermutations which, after exposure to antigen and selection, allow affinity maturation for a particular antigen. This chain is Immunoglobulin kappa variable 1D-43, found in Homo sapiens (Human).